Reading from the N-terminus, the 175-residue chain is Peptide methionine sulfoxide reductase MsrA (175 aa).

Residue cysteine 10 is part of the active site.

Belongs to the MsrA Met sulfoxide reductase family.

The enzyme catalyses L-methionyl-[protein] + [thioredoxin]-disulfide + H2O = L-methionyl-(S)-S-oxide-[protein] + [thioredoxin]-dithiol. It catalyses the reaction [thioredoxin]-disulfide + L-methionine + H2O = L-methionine (S)-S-oxide + [thioredoxin]-dithiol. In terms of biological role, has an important function as a repair enzyme for proteins that have been inactivated by oxidation. Catalyzes the reversible oxidation-reduction of methionine sulfoxide in proteins to methionine. The sequence is that of Peptide methionine sulfoxide reductase MsrA from Clavibacter sepedonicus (Clavibacter michiganensis subsp. sepedonicus).